The following is a 209-amino-acid chain: Imidazoleglycerol-phosphate dehydratase (209 aa).

Belongs to the imidazoleglycerol-phosphate dehydratase family.

Its subcellular location is the cytoplasm. It catalyses the reaction D-erythro-1-(imidazol-4-yl)glycerol 3-phosphate = 3-(imidazol-4-yl)-2-oxopropyl phosphate + H2O. It functions in the pathway amino-acid biosynthesis; L-histidine biosynthesis; L-histidine from 5-phospho-alpha-D-ribose 1-diphosphate: step 6/9. This Paracidovorax citrulli (strain AAC00-1) (Acidovorax citrulli) protein is Imidazoleglycerol-phosphate dehydratase.